A 156-amino-acid chain; its full sequence is SsrA-binding protein (156 aa).

This sequence belongs to the SmpB family.

It localises to the cytoplasm. In terms of biological role, required for rescue of stalled ribosomes mediated by trans-translation. Binds to transfer-messenger RNA (tmRNA), required for stable association of tmRNA with ribosomes. tmRNA and SmpB together mimic tRNA shape, replacing the anticodon stem-loop with SmpB. tmRNA is encoded by the ssrA gene; the 2 termini fold to resemble tRNA(Ala) and it encodes a 'tag peptide', a short internal open reading frame. During trans-translation Ala-aminoacylated tmRNA acts like a tRNA, entering the A-site of stalled ribosomes, displacing the stalled mRNA. The ribosome then switches to translate the ORF on the tmRNA; the nascent peptide is terminated with the 'tag peptide' encoded by the tmRNA and targeted for degradation. The ribosome is freed to recommence translation, which seems to be the essential function of trans-translation. The protein is SsrA-binding protein of Staphylococcus epidermidis (strain ATCC 35984 / DSM 28319 / BCRC 17069 / CCUG 31568 / BM 3577 / RP62A).